Here is a 466-residue protein sequence, read N- to C-terminus: 3-isopropylmalate dehydratase large subunit (466 aa).

The [4Fe-4S] cluster site is built by Cys347, Cys407, and Cys410.

It belongs to the aconitase/IPM isomerase family. LeuC type 1 subfamily. Heterodimer of LeuC and LeuD. [4Fe-4S] cluster serves as cofactor.

The enzyme catalyses (2R,3S)-3-isopropylmalate = (2S)-2-isopropylmalate. The protein operates within amino-acid biosynthesis; L-leucine biosynthesis; L-leucine from 3-methyl-2-oxobutanoate: step 2/4. Catalyzes the isomerization between 2-isopropylmalate and 3-isopropylmalate, via the formation of 2-isopropylmaleate. This Buchnera aphidicola subsp. Thelaxes suberi protein is 3-isopropylmalate dehydratase large subunit.